A 350-amino-acid chain; its full sequence is Inhibin beta E chain (350 aa).

The first 21 residues, Met-1–Ser-21, serve as a signal peptide directing secretion. A propeptide spanning residues Thr-22 to Arg-236 is cleaved from the precursor. N-linked (GlcNAc...) asparagine glycosylation is present at Asn-198. Cystine bridges form between Cys-240–Cys-248, Cys-247–Cys-315, Cys-276–Cys-347, and Cys-280–Cys-349.

It belongs to the TGF-beta family. As to quaternary structure, homodimeric or heterodimeric through association with alpha and beta subunits, linked by one or more disulfide bonds. Inhibins are heterodimers of one alpha and one beta subunit. Activins are homo- or heterodimers of beta subunits only.

Its subcellular location is the secreted. Its function is as follows. Inhibins and activins inhibit and activate, respectively, the secretion of follitropin by the pituitary gland. Inhibins/activins are involved in regulating a number of diverse functions such as hypothalamic and pituitary hormone secretion, gonadal hormone secretion, germ cell development and maturation, erythroid differentiation, insulin secretion, nerve cell survival, embryonic axial development or bone growth, depending on their subunit composition. Inhibins appear to oppose the functions of activins. Functionally, activin E is a homodimer of INHBE secreted by the liver that plays a crucial role in regulating metabolic homeostasis particularly in lipid metabolism and energy homeostasis. Plays a central role in the regulation of adipose tissue lipolysis by preventing the influx of fatty acids from adipose tissue into the liver. Mechanistically, signals via ACVR1C to activate SMAD2/3 signaling, suppressing PPARG target genes in adipose tissue, thereby reducing liver lipid content and improving glycemic control. Induces beige adipocyte formation and thermogenesis in response to cold exposure. This chain is Inhibin beta E chain (Inhbe), found in Rattus norvegicus (Rat).